The chain runs to 31 residues: Cytochrome b6-f complex subunit 6 (31 aa).

The helical transmembrane segment at 3-23 threads the bilayer; that stretch reads TLTSYFGFLLVALTITLVLFI.

Belongs to the PetL family. As to quaternary structure, the 4 large subunits of the cytochrome b6-f complex are cytochrome b6, subunit IV (17 kDa polypeptide, PetD), cytochrome f and the Rieske protein, while the 4 small subunits are PetG, PetL, PetM and PetN. The complex functions as a dimer.

The protein localises to the plastid. It localises to the chloroplast thylakoid membrane. In terms of biological role, component of the cytochrome b6-f complex, which mediates electron transfer between photosystem II (PSII) and photosystem I (PSI), cyclic electron flow around PSI, and state transitions. PetL is important for photoautotrophic growth as well as for electron transfer efficiency and stability of the cytochrome b6-f complex. In Populus alba (White poplar), this protein is Cytochrome b6-f complex subunit 6.